A 448-amino-acid chain; its full sequence is tRNA-2-methylthio-N(6)-dimethylallyladenosine synthase (448 aa).

The region spanning 3–118 is the MTTase N-terminal domain; sequence KKVFIKTFGC…LPELLNARAA (116 aa). [4Fe-4S] cluster-binding residues include Cys-12, Cys-49, Cys-81, Cys-155, Cys-159, and Cys-162. A Radical SAM core domain is found at 141-374; that stretch reads RVEGASAFVS…QAVINRNILE (234 aa). Residues 377 to 440 enclose the TRAM domain; sequence QERVGTVQRL…TYTLRGEVVM (64 aa).

The protein belongs to the methylthiotransferase family. MiaB subfamily. In terms of assembly, monomer. Requires [4Fe-4S] cluster as cofactor.

It localises to the cytoplasm. It catalyses the reaction N(6)-dimethylallyladenosine(37) in tRNA + (sulfur carrier)-SH + AH2 + 2 S-adenosyl-L-methionine = 2-methylsulfanyl-N(6)-dimethylallyladenosine(37) in tRNA + (sulfur carrier)-H + 5'-deoxyadenosine + L-methionine + A + S-adenosyl-L-homocysteine + 2 H(+). Catalyzes the methylthiolation of N6-(dimethylallyl)adenosine (i(6)A), leading to the formation of 2-methylthio-N6-(dimethylallyl)adenosine (ms(2)i(6)A) at position 37 in tRNAs that read codons beginning with uridine. This Acidovorax sp. (strain JS42) protein is tRNA-2-methylthio-N(6)-dimethylallyladenosine synthase.